The primary structure comprises 910 residues: MDTAEEDICRVCRSEGTPEKPLYHPCVCTGSIKFIHQECLVQWLKHSRKEYCELCKHRFAFTPIYSPDMPSRLPIQDIFAGLVTSIGTAIRYWFHYTLVAFAWLGVVPLTACRIYKCLFTGSVSSLLTLPLDMLSTENLLADCLQGCFVVTCTLCAFISLVWLREQIVHGGAPIWLEHAAPPFNAAGHHQNEAPAGGNGAENVAADQPANPPAENAVVGENPDAQDDQAEEEEEDNEEEDDAGVEDAADANNGAQDDMNWNALEWDRAAEELTWERMLGLDGSLVFLEHVFWVVSLNTLFILVFAFCPYHIGHFSLVGLGFEEHVQASHFEGLITTIVGYILLAITLIICHGLATLVKFHRSRRLLGVCYIVVKVSLLVVVEIGVFPLICGWWLDICSLEMFDATLKDRELSFQSAPGTTMFLHWLVGMVYVFYFASFILLLREVLRPGVLWFLRNLNDPDFNPVQEMIHLPIYRHLRRFILSVIVFGSIVLLMLWLPIRIIKSVLPNFLPYNVMLYSDAPVSELSLELLLLQVVLPALLEQRTHEAVAEGLVRAWTVTAGYLLDLHSYLLGDQEENENSANQQVNNNQHARNNNAIPVVGEGLHAAHQAILQQGGPVGFQPYRRPLNFPLRIFLLIVFMCITLLIASLICLTLPVFAGRWLMSFWTGTAKIHELYTAACGLYVCWLTIRAVTVMVAWMPQGRRVVFQKVKEWSLMIMKTLIVAVLLAGVVPLLLGLLFELVIVAPLRVPLDQTPLFYPWQDWALGVLHAKIIAAITLMGPQWWLKTVIEQVYANGIRNIDLHYIVRKLAAPVISVLLLSLCVPYVIASGVVPLLGVTAEMQNLVHRRIYPFLLMVVVLMAILSFQVRQFKRLYEHIKNDKYLVGQRLVNYERKSGKQGSSPPPPQSSQE.

M1 bears the N-acetylmethionine mark. The segment at 1-62 adopts an RING-CH-type zinc-finger fold; the sequence is MDTAEEDICR…ELCKHRFAFT (62 aa). The Cytoplasmic portion of the chain corresponds to 1-91; sequence MDTAEEDICR…LVTSIGTAIR (91 aa). Residues C9, C12, C26, C28, H36, C39, C52, and C55 each coordinate Zn(2+). The chain crosses the membrane as a helical span at residues 92–112; sequence YWFHYTLVAFAWLGVVPLTAC. The Extracellular segment spans residues 113–142; the sequence is RIYKCLFTGSVSSLLTLPLDMLSTENLLAD. Residues 143–163 traverse the membrane as a helical segment; that stretch reads CLQGCFVVTCTLCAFISLVWL. At 164 to 283 the chain is on the cytoplasmic side; sequence REQIVHGGAP…WERMLGLDGS (120 aa). The tract at residues 185–256 is disordered; it reads AAGHHQNEAP…AADANNGAQD (72 aa). Positions 223–248 are enriched in acidic residues; sequence DAQDDQAEEEEEDNEEEDDAGVEDAA. A helical membrane pass occupies residues 284-304; it reads LVFLEHVFWVVSLNTLFILVF. Topologically, residues 305 to 336 are extracellular; it reads AFCPYHIGHFSLVGLGFEEHVQASHFEGLITT. A helical membrane pass occupies residues 337–357; that stretch reads IVGYILLAITLIICHGLATLV. Topologically, residues 358–376 are cytoplasmic; it reads KFHRSRRLLGVCYIVVKVS. Residues 377 to 397 traverse the membrane as a helical segment; sequence LLVVVEIGVFPLICGWWLDIC. Residues 398–421 are Extracellular-facing; it reads SLEMFDATLKDRELSFQSAPGTTM. Residues 422-442 traverse the membrane as a helical segment; that stretch reads FLHWLVGMVYVFYFASFILLL. Over 443-480 the chain is Cytoplasmic; it reads REVLRPGVLWFLRNLNDPDFNPVQEMIHLPIYRHLRRF. The helical transmembrane segment at 481–501 threads the bilayer; sequence ILSVIVFGSIVLLMLWLPIRI. The Extracellular portion of the chain corresponds to 502 to 519; that stretch reads IKSVLPNFLPYNVMLYSD. Residues 520-540 form a helical membrane-spanning segment; that stretch reads APVSELSLELLLLQVVLPALL. Residues 541 to 632 are Cytoplasmic-facing; that stretch reads EQRTHEAVAE…YRRPLNFPLR (92 aa). Residues 633–653 form a helical membrane-spanning segment; that stretch reads IFLLIVFMCITLLIASLICLT. Residues 654 to 678 are Extracellular-facing; sequence LPVFAGRWLMSFWTGTAKIHELYTA. The helical transmembrane segment at 679–699 threads the bilayer; sequence ACGLYVCWLTIRAVTVMVAWM. Over 700-721 the chain is Cytoplasmic; it reads PQGRRVVFQKVKEWSLMIMKTL. A helical transmembrane segment spans residues 722–742; it reads IVAVLLAGVVPLLLGLLFELV. The Extracellular portion of the chain corresponds to 743–764; the sequence is IVAPLRVPLDQTPLFYPWQDWA. A helical membrane pass occupies residues 765–785; sequence LGVLHAKIIAAITLMGPQWWL. The Cytoplasmic segment spans residues 786–815; it reads KTVIEQVYANGIRNIDLHYIVRKLAAPVIS. A helical transmembrane segment spans residues 816–836; sequence VLLLSLCVPYVIASGVVPLLG. Topologically, residues 837 to 848 are extracellular; it reads VTAEMQNLVHRR. Residues 849-869 form a helical membrane-spanning segment; that stretch reads IYPFLLMVVVLMAILSFQVRQ. Over 870 to 910 the chain is Cytoplasmic; the sequence is FKRLYEHIKNDKYLVGQRLVNYERKSGKQGSSPPPPQSSQE.

It belongs to the DOA10/MARCHF6 family. Interacts with DIO2. Interacts with SQLE. Auto-ubiquitinated, which results in proteasomal degradation. Deubiquitinated by USP19; protecting MARCHF6 from p97-mediated proteasomal degradation.

It is found in the endoplasmic reticulum membrane. It carries out the reaction S-ubiquitinyl-[E2 ubiquitin-conjugating enzyme]-L-cysteine + [acceptor protein]-L-lysine = [E2 ubiquitin-conjugating enzyme]-L-cysteine + N(6)-ubiquitinyl-[acceptor protein]-L-lysine.. Its pathway is protein modification; protein ubiquitination. Its function is as follows. Endoplasmic reticulum membrane-associated E3 ubiquitin ligase that plays a critical role in mitigating endoplasmic reticulum stress, the regulation of cholesterol and lipid homeostasis, and ferroptosis. Acts as a pivotal component of both the Ac/N-degron pathway (targeting the N-terminal acetyl group of substrates) and the ER-associated protein degradation-cytosol (ERAD-C) pathway (targeting misfolded substrates). For instance, mediates the degradation of Ac/N-degron-bearing proteins such as the G-protein regulator RGS2 and the lipid droplet protein PLIN2. Suppresses endoplasmic reticulum stress and ferroptosis through cytosolic POMC degradation. Prevents ferroptosis by acting as a NADPH sensor during lipid peroxidation through its C-terminal regulatory region. Facilitates also the degradation of selected endoplasmic reticulum proteins by associating with signal peptide peptidase for the turnover of endogenous tail-anchored proteins. Promotes ubiquitination of DIO2, leading to its degradation. By ubiquitinating and thereby modulating the stability of many proteins of the cholesterol pathway including SQLE, CYP51A1, CYP11A1 and HMGCR, acts as a crucial post-translational regulator of cholesterol synthesis. This Pongo abelii (Sumatran orangutan) protein is E3 ubiquitin-protein ligase MARCHF6 (MARCHF6).